The primary structure comprises 706 residues: Termination factor NPH-I homolog (706 aa).

Positions 62–227 constitute a Helicase ATP-binding domain; sequence IGQGENTRGL…VPCFNMLSGR (166 aa). 75 to 82 is an ATP binding site; the sequence is HQMGMGKT. Residues 168 to 171 carry the DEAH box motif; sequence DEAH. In terms of domain architecture, Helicase C-terminal spans 417-599; sequence QCLQPLKVLE…HLNSAFRDLL (183 aa).

It belongs to the DEAD box helicase family. DEAH subfamily. In terms of assembly, part of the viral DNA-directed RNA polymerase that consists of 8 polII-like subunits (RPB1, RPB2, RPB3, RPB5, RPB6, RPB7, RPB9, RPB10), a capping enzyme and a termination factor.

It localises to the virion. Its function is as follows. Putative DNA-dependent ATPase required for providing the needed energy to achieve the termination of early transcripts. The protein is Termination factor NPH-I homolog of African swine fever virus (isolate Warthog/Namibia/Wart80/1980) (ASFV).